The chain runs to 73 residues: Large ribosomal subunit protein bL31 (73 aa).

The Zn(2+) site is built by cysteine 16, cysteine 18, cysteine 36, and cysteine 39.

Belongs to the bacterial ribosomal protein bL31 family. Type A subfamily. Part of the 50S ribosomal subunit. The cofactor is Zn(2+).

Functionally, binds the 23S rRNA. The polypeptide is Large ribosomal subunit protein bL31 (Myxococcus xanthus (strain DK1622)).